A 263-amino-acid polypeptide reads, in one-letter code: Ribosomal RNA small subunit methyltransferase A (263 aa).

6 residues coordinate S-adenosyl-L-methionine: Asn-13, Thr-15, Gly-40, Glu-61, Asp-85, and Asn-105.

It belongs to the class I-like SAM-binding methyltransferase superfamily. rRNA adenine N(6)-methyltransferase family. RsmA subfamily.

Its subcellular location is the cytoplasm. It carries out the reaction adenosine(1518)/adenosine(1519) in 16S rRNA + 4 S-adenosyl-L-methionine = N(6)-dimethyladenosine(1518)/N(6)-dimethyladenosine(1519) in 16S rRNA + 4 S-adenosyl-L-homocysteine + 4 H(+). Specifically dimethylates two adjacent adenosines (A1518 and A1519) in the loop of a conserved hairpin near the 3'-end of 16S rRNA in the 30S particle. May play a critical role in biogenesis of 30S subunits. In Mycoplasma pneumoniae (strain ATCC 29342 / M129 / Subtype 1) (Mycoplasmoides pneumoniae), this protein is Ribosomal RNA small subunit methyltransferase A.